We begin with the raw amino-acid sequence, 60 residues long: UPF0337 protein SAV1625 (60 aa).

The interval 18–41 is disordered; that stretch reads VGNVTDNKELEKEGQQDKATGKAK. A compositionally biased stretch (basic and acidic residues) spans 23–41; that stretch reads DNKELEKEGQQDKATGKAK.

It belongs to the UPF0337 (CsbD) family.

The protein is UPF0337 protein SAV1625 of Staphylococcus aureus (strain Mu50 / ATCC 700699).